The chain runs to 130 residues: Small ribosomal subunit protein uS9 (130 aa).

This sequence belongs to the universal ribosomal protein uS9 family.

The polypeptide is Small ribosomal subunit protein uS9 (Desulfosudis oleivorans (strain DSM 6200 / JCM 39069 / Hxd3) (Desulfococcus oleovorans)).